Reading from the N-terminus, the 157-residue chain is SUMO-conjugating enzyme UBC9-B (157 aa).

The 154-residue stretch at 4–157 folds into the UBC core domain; it reads IALSRLAQER…VRAQAKKFSP (154 aa). The interval 13 to 18 is interaction with SUMO1; sequence RKAWRK. Cysteine 93 acts as the Glycyl thioester intermediate in catalysis.

This sequence belongs to the ubiquitin-conjugating enzyme family. In terms of assembly, forms a tight complex with rangap1 and ranbp2. Interacts with vsx1.

It localises to the nucleus. It participates in protein modification; protein sumoylation. Its function is as follows. Accepts the ubiquitin-like proteins sumo1, sumo2 and sumo3 from the uble1a-uble1b E1 complex and catalyzes their covalent attachment to other proteins with the help of an E3 ligase such as ranbp2 or cbx4. Essential for nuclear architecture and chromosome segregation. Mediates nuclear localization of vsx1. Required for progression through mitosis during organogenesis. The chain is SUMO-conjugating enzyme UBC9-B (ube2ib) from Danio rerio (Zebrafish).